Here is a 215-residue protein sequence, read N- to C-terminus: UPF0502 protein YceH (215 aa).

Belongs to the UPF0502 family.

The sequence is that of UPF0502 protein YceH from Salmonella paratyphi C (strain RKS4594).